A 151-amino-acid polypeptide reads, in one-letter code: ALK and LTK ligand 2 (151 aa).

The signal sequence occupies residues 1–25 (MRVSGRPMLLALLLLLSTVGDRGRA). 2 disulfide bridges follow: Cys-112/Cys-148 and Cys-126/Cys-135.

The protein belongs to the ALKAL family. Homodimer.

The protein resides in the secreted. It is found in the cell membrane. In terms of biological role, cytokine that acts as a physiological ligand for receptor tyrosine kinases LTK and ALK, leading to their activation. Cytokine-binding is sufficient to activate LTK. In contrast, ALKAL2-driven activation of ALK is coupled with heparin-binding to ALK. Stimulation of ALK signaling is involved in neural development and regulation of energy expenditure. This Mus musculus (Mouse) protein is ALK and LTK ligand 2.